Consider the following 231-residue polypeptide: MEEITINIDKIKINDDWKEFLRDEFQKKYFLEIKKQYLNAINQNIIIYPPANLIFNAFNLCPLKEIKIIILGQDPYHQPNQAMGLSFSVPKNVKIPPSLNNVFKELQNDLNITPAKSGDLSSWAKQGVLLLNSILSVEANKAASHSSWGWQEFSDAIIHKLSNEKSGLVFMLWGNYAKNKEILIDNAKHLILKAAHPSPLARTGFLGCKHFSKANEFLKKVGKIPIDWKIV.

The Proton acceptor role is filled by Asp74.

Belongs to the uracil-DNA glycosylase (UDG) superfamily. UNG family.

It is found in the cytoplasm. It catalyses the reaction Hydrolyzes single-stranded DNA or mismatched double-stranded DNA and polynucleotides, releasing free uracil.. Functionally, excises uracil residues from the DNA which can arise as a result of misincorporation of dUMP residues by DNA polymerase or due to deamination of cytosine. This is Uracil-DNA glycosylase from Campylobacter jejuni subsp. jejuni serotype O:6 (strain 81116 / NCTC 11828).